Reading from the N-terminus, the 491-residue chain is UDP-N-acetylmuramoyl-L-alanyl-D-glutamate--2,6-diaminopimelate ligase (491 aa).

S30 contacts UDP-N-acetyl-alpha-D-muramoyl-L-alanyl-D-glutamate. Residue 108–114 coordinates ATP; the sequence is GTNGKTT. UDP-N-acetyl-alpha-D-muramoyl-L-alanyl-D-glutamate contacts are provided by residues N149, 150–151, S177, Q183, and R185; that span reads TT. K217 is modified (N6-carboxylysine). Residues R383, 407–410, G458, and E462 contribute to the meso-2,6-diaminopimelate site; that span reads DNPR. Residues 407-410 carry the Meso-diaminopimelate recognition motif motif; that stretch reads DNPR.

It belongs to the MurCDEF family. MurE subfamily. Mg(2+) is required as a cofactor. In terms of processing, carboxylation is probably crucial for Mg(2+) binding and, consequently, for the gamma-phosphate positioning of ATP.

The protein localises to the cytoplasm. It carries out the reaction UDP-N-acetyl-alpha-D-muramoyl-L-alanyl-D-glutamate + meso-2,6-diaminopimelate + ATP = UDP-N-acetyl-alpha-D-muramoyl-L-alanyl-gamma-D-glutamyl-meso-2,6-diaminopimelate + ADP + phosphate + H(+). It functions in the pathway cell wall biogenesis; peptidoglycan biosynthesis. Its function is as follows. Catalyzes the addition of meso-diaminopimelic acid to the nucleotide precursor UDP-N-acetylmuramoyl-L-alanyl-D-glutamate (UMAG) in the biosynthesis of bacterial cell-wall peptidoglycan. The protein is UDP-N-acetylmuramoyl-L-alanyl-D-glutamate--2,6-diaminopimelate ligase of Listeria innocua serovar 6a (strain ATCC BAA-680 / CLIP 11262).